A 120-amino-acid chain; its full sequence is Large ribosomal subunit protein uL18 (120 aa).

This sequence belongs to the universal ribosomal protein uL18 family. As to quaternary structure, part of the 50S ribosomal subunit; part of the 5S rRNA/L5/L18/L25 subcomplex. Contacts the 5S and 23S rRNAs.

Functionally, this is one of the proteins that bind and probably mediate the attachment of the 5S RNA into the large ribosomal subunit, where it forms part of the central protuberance. In Ehrlichia ruminantium (strain Gardel), this protein is Large ribosomal subunit protein uL18.